The sequence spans 58 residues: Keratin-associated protein 19-9b (58 aa).

Residues 6–52 (GNYYGGLGYGLGGFGGFGGLGYGYGSSYGLGGYGGYGYFSPSFYGGY) are 12 X 2 AA repeats of G-[YCGS].

The protein belongs to the KRTAP type 19 family. As to quaternary structure, interacts with hair keratins.

In the hair cortex, hair keratin intermediate filaments are embedded in an interfilamentous matrix, consisting of hair keratin-associated proteins (KRTAP), which are essential for the formation of a rigid and resistant hair shaft through their extensive disulfide bond cross-linking with abundant cysteine residues of hair keratins. The matrix proteins include the high-sulfur and high-glycine-tyrosine keratins. The polypeptide is Keratin-associated protein 19-9b (Krtap19-9b) (Mus musculus (Mouse)).